The sequence spans 469 residues: Properdin (469 aa).

Residues 1 to 27 (MITEGAQAPRLLLPPLLLLLTLPATGS) form the signal peptide. 7 consecutive TSP type-1 domains span residues 28 to 76 (DPVL…QPCR), 77 to 134 (SPRW…QCCP), 136 to 191 (MGGW…QSCP), 193 to 255 (HGAW…PPCP), 257 to 313 (AGSW…VPCP), 315 to 377 (DGEW…QHCP), and 379 to 462 (KGSW…PACK). 3 disulfide bridges follow: Cys32-Cys56, Cys43-Cys72, and Cys57-Cys75. 2 C-linked (Man) tryptophan glycosylation sites follow: Trp83 and Trp86. 7 disulfides stabilise this stretch: Cys89–Cys127, Cys93–Cys133, Cys104–Cys111, Cys132–Cys170, Cys148–Cys184, Cys152–Cys190, and Cys163–Cys174. Residues Trp139, Trp142, and Trp145 are each glycosylated (C-linked (Man) tryptophan). Residue Thr151 is glycosylated (O-linked (Fuc...) threonine). Trp196, Trp199, and Trp202 each carry a C-linked (Man) tryptophan glycan. 3 disulfide bridges follow: Cys205–Cys248, Cys209–Cys254, and Cys224–Cys238. Residue Ser208 is glycosylated (O-linked (Fuc...) serine). Positions 218–238 (ETRSRKCSAPEPSQKPPGKPC) are disordered. 2 C-linked (Man) tryptophan glycosylation sites follow: Trp260 and Trp263. 3 cysteine pairs are disulfide-bonded: Cys269–Cys306, Cys273–Cys312, and Cys284–Cys296. Thr272 carries an O-linked (Fuc...) threonine glycan. 2 C-linked (Man) tryptophan glycosylation sites follow: Trp321 and Trp324. 3 cysteine pairs are disulfide-bonded: Cys327–Cys370, Cys337–Cys376, and Cys350–Cys360. The tract at residues 351 to 359 (KGRKFDGHR) is interaction with Complement C3 beta chain. 3 C-linked (Man) tryptophan glycosylation sites follow: Trp382, Trp385, and Trp388. 3 disulfide bridges follow: Cys391/Cys455, Cys395/Cys461, and Cys407/Cys439. Asn428 carries N-linked (GlcNAc...) asparagine glycosylation.

As to quaternary structure, in plasma, properdin exists as dimers, trimers or tetramers in the relative proportions of 26:54:20. Interacts with the pro-C3-convertase enzyme complex (C3b-Bb) comprised of Complement C3 beta chain (C3b) and the Complement factor B Bb fragment (Bb), where it binds (via its TSP type-1 5 domain) with C3b and Bb. This interaction stabilizes the complex and allows it to become the active C3-convertase enzyme complex (C3b-Bb-FP). Interacts with C3b. Interacts with CFB.

The protein localises to the secreted. A positive regulator of the alternate pathway of complement. It binds to and stabilizes the C3- and C5-convertase enzyme complexes. Inhibits CFI-CFH mediated degradation of Inhibits CFI-CFH mediated degradation of Complement C3 beta chain (C3b). This chain is Properdin (CFP), found in Pongo abelii (Sumatran orangutan).